We begin with the raw amino-acid sequence, 454 residues long: UDP-N-acetylmuramoylalanine--D-glutamate ligase (454 aa).

115-121 contacts ATP; that stretch reads GTNGKTT.

Belongs to the MurCDEF family.

The protein localises to the cytoplasm. The enzyme catalyses UDP-N-acetyl-alpha-D-muramoyl-L-alanine + D-glutamate + ATP = UDP-N-acetyl-alpha-D-muramoyl-L-alanyl-D-glutamate + ADP + phosphate + H(+). It participates in cell wall biogenesis; peptidoglycan biosynthesis. Functionally, cell wall formation. Catalyzes the addition of glutamate to the nucleotide precursor UDP-N-acetylmuramoyl-L-alanine (UMA). In Thermoanaerobacter sp. (strain X514), this protein is UDP-N-acetylmuramoylalanine--D-glutamate ligase.